The sequence spans 421 residues: Gamma-glutamyl phosphate reductase (421 aa).

Belongs to the gamma-glutamyl phosphate reductase family.

It is found in the cytoplasm. The catalysed reaction is L-glutamate 5-semialdehyde + phosphate + NADP(+) = L-glutamyl 5-phosphate + NADPH + H(+). Its pathway is amino-acid biosynthesis; L-proline biosynthesis; L-glutamate 5-semialdehyde from L-glutamate: step 2/2. In terms of biological role, catalyzes the NADPH-dependent reduction of L-glutamate 5-phosphate into L-glutamate 5-semialdehyde and phosphate. The product spontaneously undergoes cyclization to form 1-pyrroline-5-carboxylate. This is Gamma-glutamyl phosphate reductase from Pseudomonas paraeruginosa (strain DSM 24068 / PA7) (Pseudomonas aeruginosa (strain PA7)).